We begin with the raw amino-acid sequence, 330 residues long: DNA primase small subunit PriS (330 aa).

Residues Asp-101 and Asp-103 contribute to the active site. Zn(2+)-binding residues include Cys-116, Cys-119, Cys-128, and Asp-131. The active site involves Asp-235.

This sequence belongs to the eukaryotic-type primase small subunit family. Heterodimer of a small subunit (PriS) and a large subunit (PriL). It depends on Mg(2+) as a cofactor. Requires Mn(2+) as cofactor.

In terms of biological role, catalytic subunit of DNA primase, an RNA polymerase that catalyzes the synthesis of short RNA molecules used as primers for DNA polymerase during DNA replication. The small subunit contains the primase catalytic core and has DNA synthesis activity on its own. Binding to the large subunit stabilizes and modulates the activity, increasing the rate of DNA synthesis while decreasing the length of the DNA fragments, and conferring RNA synthesis capability. The DNA polymerase activity may enable DNA primase to also catalyze primer extension after primer synthesis. May also play a role in DNA repair. This Saccharolobus islandicus (strain Y.N.15.51 / Yellowstone #2) (Sulfolobus islandicus) protein is DNA primase small subunit PriS.